Here is a 367-residue protein sequence, read N- to C-terminus: Alginate lyase (367 aa).

The signal sequence occupies residues 1 to 24 (MTLLKRISSPALLALALFGGAAHA). Substrate contacts are provided by residues 63-64 (SK), 136-137 (HT), and Tyr254.

The protein belongs to the polysaccharide lyase 5 family.

The protein localises to the periplasm. The catalysed reaction is Eliminative cleavage of alginate to give oligosaccharides with 4-deoxy-alpha-L-erythro-hex-4-enuronosyl groups at their non-reducing ends and beta-D-mannuronate at their reducing end.. Catalyzes the depolymerization of alginate by cleaving the beta-1,4 glycosidic bond between two adjacent sugar residues via a beta-elimination mechanism. May serve to degrade mislocalized alginate that is trapped in the periplasmic space. The sequence is that of Alginate lyase from Pseudomonas putida (strain GB-1).